The chain runs to 285 residues: Tropomyosin alpha-3 chain (285 aa).

Residues M1 to I285 adopt a coiled-coil conformation. N-acetylmethionine is present on M2. M2 is modified (N-acetylalanine). Basic and acidic residues predominate over residues K16–E41. A disordered region spans residues K16 to L44. Phosphothreonine is present on T54. 2 positions are modified to phosphoserine: S62 and S88. Residue T109 is modified to Phosphothreonine. 2 positions are modified to N6-acetyllysine: E125 and L177. Phosphoserine is present on S207. An N6-acetyllysine modification is found at Y215. The residue at position 216 (S216) is a Phosphoserine. T253 carries the post-translational modification Phosphothreonine. A Phosphotyrosine modification is found at Y262. S272 is modified (phosphoserine). A Phosphothreonine modification is found at T283. Residue S284 is modified to Phosphoserine.

This sequence belongs to the tropomyosin family. In terms of assembly, homodimer. Heterodimer of an alpha (TPM1, TPM3 or TPM4) and a beta (TPM2) chain. Interacts with TMOD1. Interacts with TNNT1.

It localises to the cytoplasm. The protein resides in the cytoskeleton. Its function is as follows. Binds to actin filaments in muscle and non-muscle cells. Plays a central role, in association with the troponin complex, in the calcium dependent regulation of vertebrate striated muscle contraction. Smooth muscle contraction is regulated by interaction with caldesmon. In non-muscle cells is implicated in stabilizing cytoskeleton actin filaments. This Homo sapiens (Human) protein is Tropomyosin alpha-3 chain (TPM3).